A 459-amino-acid chain; its full sequence is Zinc finger and BTB domain-containing protein 9 (459 aa).

The BTB domain occupies 48 to 112 (CDVSLLVQGR…IYSGSLHLPL (65 aa)). Polar residues predominate over residues 178-189 (VRSSASTENSVL). 2 disordered regions span residues 178–200 (VRSS…EGSE) and 212–274 (EEEE…ASQI). Glycyl lysine isopeptide (Lys-Gly) (interchain with G-Cter in SUMO2) cross-links involve residues lysine 285, lysine 293, and lysine 368. Residues 293 to 356 (KEKTKVLSGE…GGTGQAMHGP (64 aa)) form a disordered region. The C2H2-type 1 zinc-finger motif lies at 397 to 419 (FGCGICNKRFKLKHHLTEHMKTH). The C2H2-type 2; atypical zinc finger occupies 424–446 (HACPHCGRRFRVQAFFLRHRDLC).

The protein resides in the nucleus. In terms of biological role, may be involved in transcriptional regulation. This Mus musculus (Mouse) protein is Zinc finger and BTB domain-containing protein 9 (Zbtb9).